A 634-amino-acid chain; its full sequence is uncharacterized protein (634 aa).

Positions 1-40 (MWLQQRLKGLPGLLSSSWARRLLCLLGLLLLLLWFGGSGA) are cleaved as a signal peptide. The Extracellular segment spans residues 41-589 (RRAAGGLHLL…DEHMAQQDPG (549 aa)). Residue N363 is glycosylated (N-linked (GlcNAc...) asparagine). The helical transmembrane segment at 590–610 (LPFLFWFSVASLITLFHLFLF) threads the bilayer. The Cytoplasmic segment spans residues 611-634 (KLIYNEYCGPGAKPLFRSKEDPSV).

Its subcellular location is the membrane. This is an uncharacterized protein from Homo sapiens (Human).